The sequence spans 212 residues: uncharacterized protein (212 aa).

Residues Gly-53, Glu-74, and Asp-97 each contribute to the S-adenosyl-L-methionine site.

Belongs to the methyltransferase superfamily. YrrT family.

Functionally, could be a S-adenosyl-L-methionine-dependent methyltransferase. This is an uncharacterized protein from Bacillus cereus (strain ATCC 14579 / DSM 31 / CCUG 7414 / JCM 2152 / NBRC 15305 / NCIMB 9373 / NCTC 2599 / NRRL B-3711).